Here is an 87-residue protein sequence, read N- to C-terminus: U3-theraphotoxin-Hhn1b (87 aa).

An N-terminal signal peptide occupies residues 1–24 (MVNMKASMFLTFAGLVLLFVVCYA). The propeptide occupies 25-52 (SESEEKEFPREMLSSIFAVDNDFKQEER). Intrachain disulfides connect Cys54/Cys67 and Cys61/Cys72.

Belongs to the neurotoxin 10 (Hwtx-1) family. 51 (Hntx-8) subfamily. Hntx-8 sub-subfamily. Expressed by the venom gland.

The protein resides in the secreted. Functionally, ion channel inhibitor. This is U3-theraphotoxin-Hhn1b from Cyriopagopus hainanus (Chinese bird spider).